Consider the following 268-residue polypeptide: Undecaprenyl-diphosphatase (268 aa).

Helical transmembrane passes span 8–28 (VILG…TGHL), 41–61 (AFWD…IVGL), 83–103 (FVIG…VAGK), 108–128 (VLFN…ILLW), 144–164 (FPLL…IPGV), 184–204 (AAEF…AYDF), 218–238 (IVAI…KTFL), and 246–266 (FVVF…ALAL).

This sequence belongs to the UppP family.

The protein resides in the cell inner membrane. The enzyme catalyses di-trans,octa-cis-undecaprenyl diphosphate + H2O = di-trans,octa-cis-undecaprenyl phosphate + phosphate + H(+). Catalyzes the dephosphorylation of undecaprenyl diphosphate (UPP). Confers resistance to bacitracin. The protein is Undecaprenyl-diphosphatase of Bradyrhizobium diazoefficiens (strain JCM 10833 / BCRC 13528 / IAM 13628 / NBRC 14792 / USDA 110).